The primary structure comprises 297 residues: Large ribosomal subunit protein uL3 (297 aa).

Disordered stretches follow at residues N124 to Q143 and M258 to E297.

It belongs to the universal ribosomal protein uL3 family. Part of the 50S ribosomal subunit. Forms a cluster with proteins L14 and L19.

One of the primary rRNA binding proteins, it binds directly near the 3'-end of the 23S rRNA, where it nucleates assembly of the 50S subunit. In Mycoplasma mobile (strain ATCC 43663 / 163K / NCTC 11711) (Mesomycoplasma mobile), this protein is Large ribosomal subunit protein uL3.